The chain runs to 75 residues: U14-hexatoxin-Mg1a (75 aa).

Positions 1 to 19 (MKLTLFILIVFVVLANVYA) are cleaved as a signal peptide. A propeptide spanning residues 20 to 31 (AGISERNIIGGR) is cleaved from the precursor.

Post-translationally, contains 4 disulfide bonds. As to expression, expressed by the venom gland.

The protein localises to the secreted. Functionally, no toxicity is observed upon intracranial injection into mice and intrathorax injection into crickets. This Macrothele gigas (Japanese funnel web spider) protein is U14-hexatoxin-Mg1a.